A 156-amino-acid polypeptide reads, in one-letter code: Large ribosomal subunit protein uL30 (156 aa).

It belongs to the universal ribosomal protein uL30 family. As to quaternary structure, part of the 50S ribosomal subunit.

The polypeptide is Large ribosomal subunit protein uL30 (Thermofilum pendens (strain DSM 2475 / Hrk 5)).